The primary structure comprises 238 residues: Small ribosomal subunit protein eS4 (238 aa).

Residues 38–100 form the S4 RNA-binding domain; the sequence is LPLAIVIRDV…TGEVYRVVPD (63 aa).

It belongs to the eukaryotic ribosomal protein eS4 family.

The polypeptide is Small ribosomal subunit protein eS4 (Pyrobaculum arsenaticum (strain DSM 13514 / JCM 11321 / PZ6)).